The chain runs to 425 residues: Paired box pox-neuro protein (425 aa).

The paired DNA-binding region spans 5-132; the sequence is GQAGVNQLGG…SSINRILRNS (128 aa). Residues 8–64 are PAI subdomain; sequence GVNQLGGVFVNGRPLPDCVRRRIVDLALCGVRPCDISRQLLVSHGCVSKILTRFYET. Residues 84 to 132 are RED subdomain; the sequence is TVVKKIIRLKEENSGMFAWEIREQLQQQRVCDPSSVPSISSINRILRNS. Disordered stretches follow at residues 159-188, 297-358, and 383-425; these read QAGSGPSNGYGGQAPPPPVTVAPPTPAATP, TKSE…RKRN, and LESS…EVVN. Positions 172-185 are enriched in pro residues; it reads APPPPVTVAPPTPA. 2 stretches are compositionally biased toward low complexity: residues 323–332 and 340–349; these read SSPAALSLTA and GSAPEASPGS. The span at 402 to 425 shows a compositional bias: acidic residues; that stretch reads TPEDEDPAEAEEEQEEEDSVEVVN.

In terms of tissue distribution, central and peripheral nervous systems.

Its subcellular location is the nucleus. Its function is as follows. Transcriptional regulator that specifies poly-innervated organs (chemosensory bristle). Also controls the number of neurons. The sequence is that of Paired box pox-neuro protein (Poxn) from Drosophila melanogaster (Fruit fly).